Reading from the N-terminus, the 116-residue chain is Large ribosomal subunit protein eL22B (116 aa).

This sequence belongs to the eukaryotic ribosomal protein eL22 family.

This Dictyostelium discoideum (Social amoeba) protein is Large ribosomal subunit protein eL22B (rpl22a).